We begin with the raw amino-acid sequence, 313 residues long: Aspartate carbamoyltransferase catalytic subunit (313 aa).

Carbamoyl phosphate contacts are provided by R55 and T56. K83 contributes to the L-aspartate binding site. 3 residues coordinate carbamoyl phosphate: R105, H138, and Q141. L-aspartate contacts are provided by R171 and R225. 2 residues coordinate carbamoyl phosphate: G266 and P267.

Belongs to the aspartate/ornithine carbamoyltransferase superfamily. ATCase family. Heterododecamer (2C3:3R2) of six catalytic PyrB chains organized as two trimers (C3), and six regulatory PyrI chains organized as three dimers (R2).

The enzyme catalyses carbamoyl phosphate + L-aspartate = N-carbamoyl-L-aspartate + phosphate + H(+). Its pathway is pyrimidine metabolism; UMP biosynthesis via de novo pathway; (S)-dihydroorotate from bicarbonate: step 2/3. Its function is as follows. Catalyzes the condensation of carbamoyl phosphate and aspartate to form carbamoyl aspartate and inorganic phosphate, the committed step in the de novo pyrimidine nucleotide biosynthesis pathway. The protein is Aspartate carbamoyltransferase catalytic subunit of Corynebacterium diphtheriae (strain ATCC 700971 / NCTC 13129 / Biotype gravis).